The primary structure comprises 432 residues: Dihydroorotase (432 aa).

Zn(2+) contacts are provided by His60 and His62. Residues 62–64 (HLR) and Asn94 each bind substrate. Residues Asp152, His179, and His232 each contribute to the Zn(2+) site. A substrate-binding site is contributed by Asn278. Position 305 (Asp305) interacts with Zn(2+). Asp305 is a catalytic residue. Substrate contacts are provided by residues His309 and 323–324 (FG).

Belongs to the metallo-dependent hydrolases superfamily. DHOase family. Class I DHOase subfamily. Zn(2+) is required as a cofactor.

The enzyme catalyses (S)-dihydroorotate + H2O = N-carbamoyl-L-aspartate + H(+). It participates in pyrimidine metabolism; UMP biosynthesis via de novo pathway; (S)-dihydroorotate from bicarbonate: step 3/3. Catalyzes the reversible cyclization of carbamoyl aspartate to dihydroorotate. The polypeptide is Dihydroorotase (Elusimicrobium minutum (strain Pei191)).